We begin with the raw amino-acid sequence, 218 residues long: Ras-related protein Rab-27B (218 aa).

Residue Thr2 is modified to N-acetylthreonine. Position 16–24 (16–24 (GDSGVGKTT)) interacts with GTP. An Effector region motif is present at residues 38–46 (FITTVGIDF). Residues 74-78 (DTAGQ), 133-136 (NKAD), and 163-165 (SAA) each bind GTP. Residues Cys123 and Cys188 are joined by a disulfide bond. Residues 194-218 (IPDTVNGGNSGNLDGEKPPEKKCIC) are disordered. The span at 207–218 (DGEKPPEKKCIC) shows a compositional bias: basic and acidic residues. 2 S-geranylgeranyl cysteine lipidation sites follow: Cys216 and Cys218. The residue at position 218 (Cys218) is a Cysteine methyl ester.

It belongs to the small GTPase superfamily. Rab family. As to quaternary structure, interacts with SYTL2, SYTL4, MYRIP and MLPH. Interacts with RPH3A and RPH3A. Interacts (GDP-bound form preferentially) with DENND10. In terms of tissue distribution, expressed primarily in testis.

It is found in the membrane. Its subcellular location is the late endosome. The catalysed reaction is GTP + H2O = GDP + phosphate + H(+). Regulated by guanine nucleotide exchange factors (GEFs) which promote the exchange of bound GDP for free GTP, GTPase activating proteins (GAPs) which increase the GTP hydrolysis activity, and GDP dissociation inhibitors which inhibit the dissociation of the nucleotide from the GTPase. Activated by GEFs such as DENND10. In terms of biological role, small GTPase which cycles between active GTP-bound and inactive GDP-bound states. In its active state, binds to a variety of effector proteins to regulate homeostasis of late endocytic pathway, including endosomal positioning, maturation and secretion. Plays a role in NTRK2/TRKB axonal anterograde transport by facilitating the association of NTRK2/TRKB with KLC1. May be involved in targeting uroplakins to urothelial apical membranes. In Homo sapiens (Human), this protein is Ras-related protein Rab-27B (RAB27B).